The primary structure comprises 260 residues: Methylesterase 7 (260 aa).

Ser-84 (acyl-ester intermediate) is an active-site residue. Active-site charge relay system residues include Asp-210 and His-238.

This sequence belongs to the AB hydrolase superfamily. Methylesterase family.

It catalyses the reaction methyl (indol-3-yl)acetate + H2O = (indol-3-yl)acetate + methanol + H(+). The enzyme catalyses methyl salicylate + H2O = salicylate + methanol + H(+). Its pathway is plant hormone biosynthesis. Its activity is regulated as follows. Esterase activity is down-regulated by salicylic acid (SA). In terms of biological role, methylesterase shown to have carboxylesterase activity, methyl indole-3-acetic acid (MeIAA) esterase activity and methyl salicylate (MeSA) esterase activity in vitro. Required to convert methyl salicylate (MeSA) to salicylic acid (SA) as part of the signal transduction pathways that activate systemic acquired resistance in systemic tissue. MeSA is believed to be an inactive form that needs to be demethylated to exert a biological effect. This is Methylesterase 7 from Arabidopsis thaliana (Mouse-ear cress).